A 100-amino-acid polypeptide reads, in one-letter code: Cytochrome b (100 aa).

3 helical membrane passes run 1 to 21 (MGSLLGLCLIVQIITGLFLAM), 45 to 66 (WLIRNFHANGASLFFICIYLHI), and 81 to 100 (WNIGVILLLLTMMTAFVGYV). Residues His-51 and His-65 each coordinate heme b.

The protein belongs to the cytochrome b family. In terms of assembly, the cytochrome bc1 complex contains 3 respiratory subunits (MT-CYB, CYC1 and UQCRFS1), 2 core proteins (UQCRC1 and UQCRC2) and probably 6 low-molecular weight proteins. It depends on heme b as a cofactor.

It is found in the mitochondrion inner membrane. Its function is as follows. Component of the ubiquinol-cytochrome c reductase complex (complex III or cytochrome b-c1 complex) that is part of the mitochondrial respiratory chain. The b-c1 complex mediates electron transfer from ubiquinol to cytochrome c. Contributes to the generation of a proton gradient across the mitochondrial membrane that is then used for ATP synthesis. This chain is Cytochrome b (mt-cyb), found in Polypterus sp. (Bichir).